A 252-amino-acid chain; its full sequence is uncharacterized protein (252 aa).

2 stretches are compositionally biased toward polar residues: residues 108–122 and 136–153; these read RTTMRQGRFPSSSSE and MPNTGASSSQDPFTNSQS. Residues 108 to 252 form a disordered region; it reads RTTMRQGRFP…LIWNDSSSSK (145 aa). Basic and acidic residues predominate over residues 154 to 172; sequence TEKEDAMYSKDNGFEDRSK. Polar residues predominate over residues 201–226; it reads VKSTDSAFSGQENSEAFPSRTSNLGS.

It is found in the cytoplasm. The protein resides in the mitochondrion. Its subcellular location is the nucleus. This is an uncharacterized protein from Schizosaccharomyces pombe (strain 972 / ATCC 24843) (Fission yeast).